Reading from the N-terminus, the 94-residue chain is CRISPR-associated endoribonuclease Cas2 (94 aa).

It belongs to the CRISPR-associated endoribonuclease Cas2 protein family. E.coli-subtype subfamily. As to quaternary structure, homodimer. Part of the Cas1-Cas2 complex. Forms a hexamer with 2 Cas1 dimers sandwiching a Cas2 dimer. The DNA lies across a flat surface extending from 1 Cas1 dimer, across the Cas2 dimer and contacting the other Cas1 dimer. Only 1 Cas1 protein from each dimer is catalytic, the other interacts with the Cas2 dimer and possibly target DNA.

CRISPR (clustered regularly interspaced short palindromic repeat), is an adaptive immune system that provides protection against mobile genetic elements (viruses, transposable elements and conjugative plasmids). CRISPR clusters contain sequences complementary to antecedent mobile elements and target invading nucleic acids. CRISPR clusters are transcribed and processed into CRISPR RNA (crRNA). The Cas1-Cas2 complex is involved in CRISPR adaptation, the first stage of CRISPR immunity, being required for the addition/removal of CRISPR spacers at the leader end of the CRISPR locus. The Cas1-Cas2 complex introduces staggered nicks into both strands of the CRISPR array near the leader repeat and joins the 5'-ends of the repeat strands with the 3'-ends of the new spacer sequence. Spacer DNA integration requires supercoiled target DNA and 3'-OH ends on the inserted (spacer) DNA and probably initiates with a nucleophilic attack of the C 3'-OH end of the protospacer on the minus strand of the first repeat sequence. Expression of Cas1-Cas2 in a strain lacking both genes permits spacer acquisition. Cas2 not seen to bind DNA alone; the Cas1-Cas2 complex preferentially binds CRISPR-locus DNA. Highest binding is seen to a dual forked DNA complex with 3'-overhangs and a protospacer-adjacent motif-complement specifically positioned. The protospacer DNA lies across a flat surface extending from 1 Cas1 dimer, across the Cas2 dimer and contacting the other Cas1 dimer; the 23 bp-long ds section of the DNA is bracketed by 1 Tyr-22 from each of the Cas1 dimers. Cas1 cuts within the 3'-overhang, to generate a 33-nucleotide DNA that is probably incorporated into the CRISPR leader by a cut-and-paste mechanism. This subunit's probable nuclease activity is not required for spacer acquisition. The sequence is that of CRISPR-associated endoribonuclease Cas2 (ygbF) from Escherichia coli (strain K12).